Here is a 202-residue protein sequence, read N- to C-terminus: Small ribosomal subunit protein uS4c (202 aa).

One can recognise an S4 RNA-binding domain in the interval 90–158 (MRSDNVIFRL…ISKNIELYQK (69 aa)).

The protein belongs to the universal ribosomal protein uS4 family. As to quaternary structure, part of the 30S ribosomal subunit. Contacts protein S5. The interaction surface between S4 and S5 is involved in control of translational fidelity.

It localises to the plastid. It is found in the chloroplast. In terms of biological role, one of the primary rRNA binding proteins, it binds directly to 16S rRNA where it nucleates assembly of the body of the 30S subunit. With S5 and S12 plays an important role in translational accuracy. The chain is Small ribosomal subunit protein uS4c (rps4) from Anthoceros punctatus (Hornwort).